Reading from the N-terminus, the 571-residue chain is Proline--tRNA ligase (571 aa).

The protein belongs to the class-II aminoacyl-tRNA synthetase family. ProS type 1 subfamily. Homodimer.

Its subcellular location is the cytoplasm. It carries out the reaction tRNA(Pro) + L-proline + ATP = L-prolyl-tRNA(Pro) + AMP + diphosphate. In terms of biological role, catalyzes the attachment of proline to tRNA(Pro) in a two-step reaction: proline is first activated by ATP to form Pro-AMP and then transferred to the acceptor end of tRNA(Pro). As ProRS can inadvertently accommodate and process non-cognate amino acids such as alanine and cysteine, to avoid such errors it has two additional distinct editing activities against alanine. One activity is designated as 'pretransfer' editing and involves the tRNA(Pro)-independent hydrolysis of activated Ala-AMP. The other activity is designated 'posttransfer' editing and involves deacylation of mischarged Ala-tRNA(Pro). The misacylated Cys-tRNA(Pro) is not edited by ProRS. This chain is Proline--tRNA ligase, found in Actinobacillus pleuropneumoniae serotype 7 (strain AP76).